The chain runs to 271 residues: Phosphatidylglycerol--prolipoprotein diacylglyceryl transferase (271 aa).

7 consecutive transmembrane segments (helical) span residues 18-38 (IFGLKVHWYGIMYVLALLVAL), 60-80 (YFIWVEIGVILGARIGYILIY), 103-123 (FVGIRGMSYHGAVVGFLIATY), 137-157 (LDLVAISVPCGYIFGRIGNFL), 181-201 (PSQLYEAFLEGFIVFIILLLI), 209-229 (GELIAYYTILYALARFVCEFF), and 236-256 (IGFVAFGMSMGQILSLLMFLL). Arg-152 contacts a 1,2-diacyl-sn-glycero-3-phospho-(1'-sn-glycerol).

It belongs to the Lgt family.

It localises to the cell inner membrane. The enzyme catalyses L-cysteinyl-[prolipoprotein] + a 1,2-diacyl-sn-glycero-3-phospho-(1'-sn-glycerol) = an S-1,2-diacyl-sn-glyceryl-L-cysteinyl-[prolipoprotein] + sn-glycerol 1-phosphate + H(+). It functions in the pathway protein modification; lipoprotein biosynthesis (diacylglyceryl transfer). Functionally, catalyzes the transfer of the diacylglyceryl group from phosphatidylglycerol to the sulfhydryl group of the N-terminal cysteine of a prolipoprotein, the first step in the formation of mature lipoproteins. The sequence is that of Phosphatidylglycerol--prolipoprotein diacylglyceryl transferase from Campylobacter lari (strain RM2100 / D67 / ATCC BAA-1060).